Reading from the N-terminus, the 505-residue chain is L-arabinose isomerase (505 aa).

Positions 310, 337, 354, and 453 each coordinate Mn(2+).

The protein belongs to the arabinose isomerase family. The cofactor is Mn(2+).

It carries out the reaction beta-L-arabinopyranose = L-ribulose. It functions in the pathway carbohydrate degradation; L-arabinose degradation via L-ribulose; D-xylulose 5-phosphate from L-arabinose (bacterial route): step 1/3. Catalyzes the conversion of L-arabinose to L-ribulose. The protein is L-arabinose isomerase of Clavibacter sepedonicus (Clavibacter michiganensis subsp. sepedonicus).